Consider the following 98-residue polypeptide: Protein S100-A13 (98 aa).

Residues 18–53 (TTFFTFAGREGRKGSLSVNEFKELVTQQLPHLLKDV) enclose the EF-hand domain. Residues Ser32, Glu37, Asp64, Asn66, Asp68, Glu70, and Glu75 each coordinate Ca(2+). Position 32 is a phosphoserine (Ser32).

It belongs to the S-100 family. As to quaternary structure, homodimer. Part of a copper-dependent multiprotein complex containing S100A13, FGF1 and SYT1. Interacts with FGF1 and SYT1. Interacts with IL1A.

The protein resides in the cytoplasm. The protein localises to the secreted. Its function is as follows. Plays a role in the export of proteins that lack a signal peptide and are secreted by an alternative pathway. Binds two calcium ions per subunit. Binds one copper ion. Binding of one copper ion does not interfere with calcium binding. Required for the copper-dependent stress-induced export of IL1A and FGF1. The calcium-free protein binds to lipid vesicles containing phosphatidylserine, but not to vesicles containing phosphatidylcholine. This is Protein S100-A13 (S100A13) from Bos taurus (Bovine).